The chain runs to 515 residues: 2,3-bisphosphoglycerate-independent phosphoglycerate mutase (515 aa).

D14 and S63 together coordinate Mn(2+). Residue S63 is part of the active site. Substrate-binding positions include H124, 154–155 (RD), R186, R192, 259–262 (RADR), and K334. Residues D401, H405, D442, H443, and H460 each coordinate Mn(2+).

This sequence belongs to the BPG-independent phosphoglycerate mutase family. Mg(2+) is required as a cofactor. Requires Mn(2+) as cofactor.

The enzyme catalyses (2R)-2-phosphoglycerate = (2R)-3-phosphoglycerate. The protein operates within carbohydrate degradation; glycolysis; pyruvate from D-glyceraldehyde 3-phosphate: step 3/5. With respect to regulation, activity is not affected by 2,3-bisphosphoglycerate. Its function is as follows. Catalyzes the interconversion of 2-phosphoglycerate and 3-phosphoglycerate. The protein is 2,3-bisphosphoglycerate-independent phosphoglycerate mutase of Onchocerca volvulus.